We begin with the raw amino-acid sequence, 310 residues long: Transcription factor MYB53 (310 aa).

HTH myb-type domains are found at residues 9–61 (ETGL…TNYL) and 62–116 (RPDI…KKKL). 2 DNA-binding regions (H-T-H motif) span residues 37-61 (WSALPKLAGLNRCGKSCRLRWTNYL) and 89-112 (WSMIASHLPGRTDNEIKNFWNTHL).

As to quaternary structure, interacts with FBX5. In terms of tissue distribution, highly expressed in roots and at lower levels in leaves, stems and flowers.

Its subcellular location is the nucleus. In terms of biological role, probable transcription factor. This is Transcription factor MYB53 from Arabidopsis thaliana (Mouse-ear cress).